The primary structure comprises 260 residues: Tropinone reductase homolog At2g29330 (260 aa).

13-37 (LVTGGASGIGHAIVEELAGFGAKIH) serves as a coordination point for NADP(+). Ser146 is a substrate binding site. Tyr159 (proton acceptor) is an active-site residue.

The protein belongs to the short-chain dehydrogenases/reductases (SDR) family. SDR65C subfamily.

Functionally, reductase active only on small flexible lipophilic carbonyls. No activity with cyclic monoterpenes, tropinone, nitrogen-containing tropinone analogs, tropine or pseudotropine as substrate. The sequence is that of Tropinone reductase homolog At2g29330 from Arabidopsis thaliana (Mouse-ear cress).